Here is a 256-residue protein sequence, read N- to C-terminus: tRNA-cytidine(32) 2-sulfurtransferase (256 aa).

The short motif at 35–40 is the PP-loop motif element; the sequence is SGGKDS. The [4Fe-4S] cluster site is built by C110, C113, and C201.

This sequence belongs to the TtcA family. Homodimer. It depends on Mg(2+) as a cofactor. [4Fe-4S] cluster serves as cofactor.

The protein resides in the cytoplasm. It catalyses the reaction cytidine(32) in tRNA + S-sulfanyl-L-cysteinyl-[cysteine desulfurase] + AH2 + ATP = 2-thiocytidine(32) in tRNA + L-cysteinyl-[cysteine desulfurase] + A + AMP + diphosphate + H(+). Its pathway is tRNA modification. Functionally, catalyzes the ATP-dependent 2-thiolation of cytidine in position 32 of tRNA, to form 2-thiocytidine (s(2)C32). The sulfur atoms are provided by the cysteine/cysteine desulfurase (IscS) system. The protein is tRNA-cytidine(32) 2-sulfurtransferase of Coxiella burnetii (strain CbuG_Q212) (Coxiella burnetii (strain Q212)).